Reading from the N-terminus, the 1415-residue chain is DNA-directed RNA polymerase subunit beta'' (1415 aa).

Zn(2+) contacts are provided by C217, C291, C298, and C301.

This sequence belongs to the RNA polymerase beta' chain family. RpoC2 subfamily. In plastids the minimal PEP RNA polymerase catalytic core is composed of four subunits: alpha, beta, beta', and beta''. When a (nuclear-encoded) sigma factor is associated with the core the holoenzyme is formed, which can initiate transcription. Zn(2+) is required as a cofactor.

The protein localises to the plastid. The protein resides in the chloroplast. It catalyses the reaction RNA(n) + a ribonucleoside 5'-triphosphate = RNA(n+1) + diphosphate. DNA-dependent RNA polymerase catalyzes the transcription of DNA into RNA using the four ribonucleoside triphosphates as substrates. This Phaeodactylum tricornutum (strain CCAP 1055/1) protein is DNA-directed RNA polymerase subunit beta''.